A 353-amino-acid polypeptide reads, in one-letter code: MRVAVGMSGGVDSSVAALLLKEKGYDVIGVTLKLSSIVCSNDIQVCCSPQDIKDAKRVASYLGIEHYVIDWEDIFREKVINYFVEEYKKGKTPNPCSVCNREVKTGRLAKFVNIVLGADKFATGHYIKIEDHPVYGKVIKRGSDIKKDQSYFMALLERDVLDLLIFPLSDLTKEEVRKIAEDYKIPVSQKKESFEICFTAGKTPAEYLLENNLLAFESGDIVHIDGKTVGKHKGLPFYTVGQRRGLGVRWREPLYVIEKDAERNTVVVGEREKLLTDHVSSEDFNFLVPVEKWKKEGLSVQGRYRQKAVKIKDVSIEGNRLTAYFEKPEERFAKGQVLAVYDGDILLGGGIIV.

ATP-binding positions include 6–13 (GMSGGVDS) and Leu-32. Cys-99 functions as the Nucleophile in the catalytic mechanism. An intrachain disulfide couples Cys-99 to Cys-197. Gly-124 lines the ATP pocket. The tract at residues 147–149 (KDQ) is interaction with tRNA. Cys-197 (cysteine persulfide intermediate) is an active-site residue. An interaction with tRNA region spans residues 303-304 (RY).

This sequence belongs to the MnmA/TRMU family.

The protein resides in the cytoplasm. The catalysed reaction is S-sulfanyl-L-cysteinyl-[protein] + uridine(34) in tRNA + AH2 + ATP = 2-thiouridine(34) in tRNA + L-cysteinyl-[protein] + A + AMP + diphosphate + H(+). Catalyzes the 2-thiolation of uridine at the wobble position (U34) of tRNA, leading to the formation of s(2)U34. The sequence is that of tRNA-specific 2-thiouridylase MnmA from Persephonella marina (strain DSM 14350 / EX-H1).